The following is a 248-amino-acid chain: Short-chain dehydrogenase/reductase iacG (248 aa).

The NADP(+) site is built by Ile-14, Asn-35, Lys-41, Asp-58, Arg-120, and Val-187.

This sequence belongs to the short-chain dehydrogenases/reductases (SDR) family.

It functions in the pathway secondary metabolite biosynthesis. Functionally, short-chain dehydrogenase/reductase; part of the gene cluster that mediates the biosynthesis of iso-A82775C, a enylepoxycyclohexane and biosynthetic precursor of the chloropestolide anticancer natural products. Within the cluster, the prenyltransferase iacE prenylates siccayne to generate pestalodiol E, using dimethylallyl diphosphate (DMAPP) as cosubstrate. The probable oxidoreductase iacF is then involved in the epoxidation of pestalodiol F to pestalodiol F, which is further converted to pestalofone A by the short-chain dehydrogenase/reductase iacG. Iso-A82775C is subsequently generated from pestalofone A by the short-chain dehydrogenase/reductase iacC. Iso-A82775C is further condensed with maldoxin via a Diels-Alder reaction to produce the anticancer natural products chloropestolides A to E. This chain is Short-chain dehydrogenase/reductase iacG, found in Pestalotiopsis fici (strain W106-1 / CGMCC3.15140).